Consider the following 64-residue polypeptide: Large ribosomal subunit protein bL28 (64 aa).

It belongs to the bacterial ribosomal protein bL28 family.

The protein is Large ribosomal subunit protein bL28 of Trichlorobacter lovleyi (strain ATCC BAA-1151 / DSM 17278 / SZ) (Geobacter lovleyi).